The following is a 234-amino-acid chain: PHD finger protein ING1 (234 aa).

Residues 129-166 (NNGKAGNAGEGGRGGRKKTRLATAASTAAASTGMTSSN) form a disordered region. A compositionally biased stretch (low complexity) spans 149–165 (LATAASTAAASTGMTSS). Residues 178 to 227 (PTYCICNQVSFGEMVACDNNACKIEWFHFGCVGLKEQPKGKWYCPECATV) form a PHD-type zinc finger. Residues cysteine 181, cysteine 183, cysteine 194, cysteine 199, histidine 205, cysteine 208, cysteine 221, and cysteine 224 each coordinate Zn(2+).

It belongs to the ING family. Interacts with H3K4me3 and to a lesser extent with H3K4me2. In terms of tissue distribution, ubiquitously expressed.

It localises to the nucleus. In terms of biological role, histone-binding component that specifically recognizes H3 tails trimethylated on 'Lys-4' (H3K4me3), which mark transcription start sites of virtually all active genes. The protein is PHD finger protein ING1 (ING1) of Arabidopsis thaliana (Mouse-ear cress).